The primary structure comprises 240 residues: MTESERRTVEELQKRLGVLFNDEELLFRALCHSSYANEQKQAGREDVESNEKLEFLGDAVLELFVCEILYRKYPEAEVGDLARVKSAVASEEVLARVSRRLELGKYLFLGKGEEKTGGRERDSILADAFEALLAALYLDQGYQKIKDLFEDEFESYIEKIMKGEILFDYKTALQEIVQREHKTPPEYVLVRTEKNGSEKLFVVEVRVNDETLAVGRGRTKKEAEKDAARKAYEKLVAEKT.

One can recognise an RNase III domain in the interval 9–141 (VEELQKRLGV…LLAALYLDQG (133 aa)). Glutamate 54 is a binding site for Mg(2+). Residue aspartate 58 is part of the active site. Residues aspartate 127 and glutamate 130 each coordinate Mg(2+). The active site involves glutamate 130. Positions 168–237 (DYKTALQEIV…ARKAYEKLVA (70 aa)) constitute a DRBM domain.

This sequence belongs to the ribonuclease III family. As to quaternary structure, homodimer. It depends on Mg(2+) as a cofactor.

The protein resides in the cytoplasm. It catalyses the reaction Endonucleolytic cleavage to 5'-phosphomonoester.. Digests double-stranded RNA. Involved in the processing of primary rRNA transcript to yield the immediate precursors to the large and small rRNAs (23S and 16S). Processes some mRNAs, and tRNAs when they are encoded in the rRNA operon. Processes pre-crRNA and tracrRNA of type II CRISPR loci if present in the organism. This is Ribonuclease 3 from Thermotoga neapolitana (strain ATCC 49049 / DSM 4359 / NBRC 107923 / NS-E).